Consider the following 189-residue polypeptide: T cell receptor gamma constant 2 (189 aa).

One can recognise an Ig-like domain in the interval 10–104 (PKPTIFLPSI…NKNGIDQEII (95 aa)). Residues C32 and C88 are joined by a disulfide bond. N-linked (GlcNAc...) asparagine glycans are attached at residues N66, N120, N136, N142, and N151. A helical transmembrane segment spans residues 155–177 (YYTYLLLLLKSVVYFAIITCCLL).

As to quaternary structure, gamma-delta TR is a heterodimer composed of a gamma and delta chain; disulfide-linked. The gamma-delta TR is associated with the transmembrane signaling CD3 coreceptor proteins following the stoichiometry: a single gamma-delta TR heterodimer associates with one CD3D-CD3E heterodimer, one CD3G-CD3E heterodimer and one CD247 homodimer forming a stable octameric structure. Upon activation, gamma-delta TR complex associates with FCER1G to initiate intracellular signaling.

The protein localises to the cell membrane. Functionally, constant region of T cell receptor (TR) gamma chain that participates in the antigen recognition. Gamma-delta TRs recognize a variety of self and foreign non-peptide antigens frequently expressed at the epithelial boundaries between the host and external environment, including endogenous lipids presented by MH-like protein CD1D and phosphoantigens presented by butyrophilin-like molecule BTN3A1. Upon antigen recognition induces rapid, innate-like immune responses involved in pathogen clearance and tissue repair. Binding of gamma-delta TR complex to antigen triggers phosphorylation of immunoreceptor tyrosine-based activation motifs (ITAMs) in the CD3 chains by the LCK and FYN kinases, allowing the recruitment, phosphorylation, and activation of ZAP70 that facilitates phosphorylation of the scaffolding proteins LCP2 and LAT. This lead to the formation of a supramolecular signalosome that recruits the phospholipase PLCG1, resulting in calcium mobilization and ERK activation, ultimately leading to T cell expansion and differentiation into effector cells. Gamma-delta TRs are produced through somatic rearrangement of a limited repertoire of variable (V), diversity (D), and joining (J) genes. The potential diversity of gamma-delta TRs is conferred by the unique ability to rearrange (D) genes in tandem and to utilize all three reading frames. The combinatorial diversity is considerably increased by the sequence exonuclease trimming and random nucleotide (N) region additions which occur during the V-(D)-J rearrangements. This Homo sapiens (Human) protein is T cell receptor gamma constant 2.